A 78-amino-acid chain; its full sequence is Large ribosomal subunit protein bL31 (78 aa).

Positions 16, 18, 38, and 41 each coordinate Zn(2+).

It belongs to the bacterial ribosomal protein bL31 family. Type A subfamily. Part of the 50S ribosomal subunit. Requires Zn(2+) as cofactor.

Binds the 23S rRNA. This Parafrankia sp. (strain EAN1pec) protein is Large ribosomal subunit protein bL31.